Consider the following 202-residue polypeptide: Peptide deformylase (202 aa).

Residues 1–24 (MAGSFAQLAKNAEKKKPSISVSKE) are disordered. Residues Cys121 and His163 each contribute to the Fe cation site. Glu164 is an active-site residue. Residue His167 participates in Fe cation binding.

The protein belongs to the polypeptide deformylase family. It depends on Fe(2+) as a cofactor.

It catalyses the reaction N-terminal N-formyl-L-methionyl-[peptide] + H2O = N-terminal L-methionyl-[peptide] + formate. In terms of biological role, removes the formyl group from the N-terminal Met of newly synthesized proteins. Requires at least a dipeptide for an efficient rate of reaction. N-terminal L-methionine is a prerequisite for activity but the enzyme has broad specificity at other positions. The polypeptide is Peptide deformylase (Prochlorococcus marinus (strain NATL1A)).